Consider the following 559-residue polypeptide: Probable inorganic carbon transporter subunit DabB1 (559 aa).

13 helical membrane passes run 4 to 24, 33 to 53, 76 to 96, 106 to 126, 173 to 193, 202 to 222, 240 to 260, 273 to 293, 310 to 330, 375 to 395, 408 to 428, 440 to 460, and 487 to 507; these read LQWL…LFAA, LSVA…VAYI, LSSI…VYSI, PRFF…VAAG, LVLA…PTLF, ATIM…LSAF, GPTP…GFII, VLHM…VLML, MGFM…FHLI, LPWL…LVIA, GAIV…FATH, MMIL…GHAF, and GLVF…YLAS.

Belongs to the inorganic carbon transporter (TC 9.A.2) DabB family. As to quaternary structure, forms a complex with DabA1.

The protein resides in the cell inner membrane. Functionally, part of an energy-coupled inorganic carbon pump. The polypeptide is Probable inorganic carbon transporter subunit DabB1 (Halothiobacillus neapolitanus (strain ATCC 23641 / c2) (Thiobacillus neapolitanus)).